A 297-amino-acid polypeptide reads, in one-letter code: uncharacterized protein (297 aa).

The tract at residues 267–297 is disordered; the sequence is NTQHAGKPGAQHRTRRSPPAFRRADRLRQSA. The span at 288–297 shows a compositional bias: basic and acidic residues; the sequence is RRADRLRQSA.

This is an uncharacterized protein from Treponema pallidum (strain Nichols).